The following is a 509-amino-acid chain: Ribonuclease Y (509 aa).

A helical transmembrane segment spans residues 1–21 (MIILVAVVTAVISFGLGYVVA). One can recognise a KH domain in the interval 199-259 (TVSTVSLPSD…IRREIARLTL (61 aa)). Positions 325 to 418 (VLDHSIEVAQ…VAAADALSAA (94 aa)) constitute an HD domain.

This sequence belongs to the RNase Y family.

The protein resides in the cell membrane. In terms of biological role, endoribonuclease that initiates mRNA decay. The sequence is that of Ribonuclease Y from Pseudothermotoga lettingae (strain ATCC BAA-301 / DSM 14385 / NBRC 107922 / TMO) (Thermotoga lettingae).